Consider the following 223-residue polypeptide: Deoxyribose-phosphate aldolase (223 aa).

D89 functions as the Proton donor/acceptor in the catalytic mechanism. The Schiff-base intermediate with acetaldehyde role is filled by K152. The Proton donor/acceptor role is filled by K181.

It belongs to the DeoC/FbaB aldolase family. DeoC type 1 subfamily.

It localises to the cytoplasm. The enzyme catalyses 2-deoxy-D-ribose 5-phosphate = D-glyceraldehyde 3-phosphate + acetaldehyde. Its pathway is carbohydrate degradation; 2-deoxy-D-ribose 1-phosphate degradation; D-glyceraldehyde 3-phosphate and acetaldehyde from 2-deoxy-alpha-D-ribose 1-phosphate: step 2/2. Functionally, catalyzes a reversible aldol reaction between acetaldehyde and D-glyceraldehyde 3-phosphate to generate 2-deoxy-D-ribose 5-phosphate. The chain is Deoxyribose-phosphate aldolase from Bacillus cereus (strain AH187).